The following is a 382-amino-acid chain: Lipoyl synthase, mitochondrial (382 aa).

The N-terminal 30 residues, 1–30 (MHGRRHLAASLARALTYAPSRSISSTPSLL), are a transit peptide targeting the mitochondrion. The span at 25-34 (STPSLLQTLD) shows a compositional bias: polar residues. Positions 25-47 (STPSLLQTLDPSTPSPAAAPPTA) are disordered. [4Fe-4S] cluster-binding residues include Cys-112, Cys-117, Cys-123, Cys-143, Cys-147, Cys-150, and Ser-359. In terms of domain architecture, Radical SAM core spans 128–348 (ETGTATATIM…RSLGVDMGFR (221 aa)).

The protein belongs to the radical SAM superfamily. Lipoyl synthase family. Requires [4Fe-4S] cluster as cofactor.

The protein resides in the mitochondrion. The enzyme catalyses [[Fe-S] cluster scaffold protein carrying a second [4Fe-4S](2+) cluster] + N(6)-octanoyl-L-lysyl-[protein] + 2 oxidized [2Fe-2S]-[ferredoxin] + 2 S-adenosyl-L-methionine + 4 H(+) = [[Fe-S] cluster scaffold protein] + N(6)-[(R)-dihydrolipoyl]-L-lysyl-[protein] + 4 Fe(3+) + 2 hydrogen sulfide + 2 5'-deoxyadenosine + 2 L-methionine + 2 reduced [2Fe-2S]-[ferredoxin]. The protein operates within protein modification; protein lipoylation via endogenous pathway; protein N(6)-(lipoyl)lysine from octanoyl-[acyl-carrier-protein]: step 2/2. In terms of biological role, catalyzes the radical-mediated insertion of two sulfur atoms into the C-6 and C-8 positions of the octanoyl moiety bound to the lipoyl domains of lipoate-dependent enzymes, thereby converting the octanoylated domains into lipoylated derivatives. This chain is Lipoyl synthase, mitochondrial, found in Oryza sativa subsp. indica (Rice).